The sequence spans 145 residues: Large ribosomal subunit protein uL13 (145 aa).

The protein belongs to the universal ribosomal protein uL13 family. Part of the 50S ribosomal subunit. Interacts weakly with proteins L3 and L6.

In terms of biological role, this protein is one of the early assembly proteins of the 50S ribosomal subunit. Binds to 23S rRNA. In Haloarcula marismortui (strain ATCC 43049 / DSM 3752 / JCM 8966 / VKM B-1809) (Halobacterium marismortui), this protein is Large ribosomal subunit protein uL13.